A 962-amino-acid chain; its full sequence is Protease 3 (962 aa).

A signal peptide spans 1–23 (MPRSTWFKALLLLVALWGPAVQA). Position 88 (His-88) interacts with Zn(2+). Glu-91 functions as the Proton acceptor in the catalytic mechanism. Zn(2+)-binding residues include His-92 and Glu-169.

It belongs to the peptidase M16 family. In terms of assembly, monomer. Zn(2+) serves as cofactor.

Its subcellular location is the periplasm. It catalyses the reaction Preferential cleavage of 16-Tyr-|-Leu-17 and 25-Phe-|-Tyr-26 bonds of oxidized insulin B chain. Also acts on other substrates of Mw less than 7 kDa such as insulin and glucagon.. Endopeptidase that degrades small peptides of less than 7 kDa, such as glucagon and insulin. This is Protease 3 (ptrA) from Salmonella typhimurium (strain LT2 / SGSC1412 / ATCC 700720).